The chain runs to 1430 residues: MRDLLNLFKQPGAQLEDFDAIRIGLASPEMIRSWSYGEVKKPETINYRTFKPERDGLFCAKIFGPVKDYECLCGKYKRLKHRGVVCEKCGVEVTVAKVRRERMGHIDLASPVAHIWFLKSLPSRIGLLLDMTLRDVERVLYFEAYIVIEPGMTPLEQGQLLTDEQYLEAVEEHGDEFDARMGAEAVLEILKGMDLEAEARRLRDDIEATGSESKIKRLSKRLKLLEAFLESGNKPEWLIMTVLPVLPPDLRPLVPLDGGRFATSDLNDLYRRVINRNNRLKRLLELAAPDIIVRNEKRMLQESVDALLDNGRRGRAITGTNKRPLKSLADMIKGKQGRFRQNLLGKRVDYSGRSVIVVGPTLRLHQCGLPKRMALELFKPFIFSKLQRRGLATTIKAAKKMVERETGEVWDILDEVIREHPVLLNRAPTLHRLGIQAFEPVLIEGKAIQLHPLVCTAYNADFDGDQMAVHVPLSLEAQLESRAMMMSTNNILSPASGEPIIVPSQDVVLGIYYMTRERVNARGEGMRLAGVEEVHRAYQTGAAELGARVEVRIRERVFDDSGEMVERVQRRQTTIGRALLFDIVPDGLPFEAVDRELDKKGVSGLVNACYRRVGLKGTVVFADQLMYTGFFYSTKAGVSIGVDDMEVPTDKEEALRSAEEEVREIEDQYASGLVTSGERYNKVVDIWAHTNDQVAGAMMEKMGKETVVDAEGNETEQKSLNSIFIMADSGARGSAAQIRQLAGMRGLMAKPDGSIIETPITANFREGLNVLQYFISTHGARKGLADTALKTANSGYLTRRLVDVSQDLVVTEEDCGTTDGLVQTPIIEGGDVVETLAERVLGRVVAEDVAVPGSTDIAVEAGTLLDEDWVERLERMGVDEIKVRSAVTCETRHGVCAKCYGRDLARGHGVNIGEAVGVIAAQSIGEPGTQLTMRTFHIGGAASRAAAVSQVEVRNTGKARLHNIKTVQHHSGSYVAVSRSGELTVMDEYGRERERYKIPYGAVLSVGDEDPVEAGQVVANWDPHTHPIVTEVDGYVRFHDFVEGVTVQREVDEVTGLSSLVVTDPKSRGTGEHKRQVTNANGKVTEERVAYKDLRPMIKLVDGDGNDLNIAGTQIPAHYYLPAGAIVSLEDNAEVRVGDALARIPQEASKTRDITGGLPRVADLFEARKPKEPAILAEASGTVGFGKETKGKQRLIITKADGETHEELIPKWRNVTVFEGEHVEKGETIADGEPNPHDILRLLGVTKLAEYIVQEIQDVFRLQGVGINDKHIEVIVRQMLRKTIVSDPGDSLHLKGEQVDRAKLLEENEQLQAQDKQPAQWEPSLLGITKASLSTESFISAASFQETTRVLTEAATRGIRDDLRGLKENVIVGRLIPAGTGFAYHAARRQEAPAPAATPEQQAEEVFASLGQGEGEGPSPSDEASGPEVE.

4 residues coordinate Zn(2+): cysteine 71, cysteine 73, cysteine 86, and cysteine 89. Mg(2+)-binding residues include aspartate 461, aspartate 463, and aspartate 465. Zn(2+) is bound by residues cysteine 815, cysteine 889, cysteine 896, and cysteine 899. The tract at residues 1388-1430 is disordered; that stretch reads RRQEAPAPAATPEQQAEEVFASLGQGEGEGPSPSDEASGPEVE. A compositionally biased stretch (low complexity) spans 1392-1405; that stretch reads APAPAATPEQQAEE.

The protein belongs to the RNA polymerase beta' chain family. In terms of assembly, the RNAP catalytic core consists of 2 alpha, 1 beta, 1 beta' and 1 omega subunit. When a sigma factor is associated with the core the holoenzyme is formed, which can initiate transcription. Requires Mg(2+) as cofactor. Zn(2+) serves as cofactor.

It carries out the reaction RNA(n) + a ribonucleoside 5'-triphosphate = RNA(n+1) + diphosphate. DNA-dependent RNA polymerase catalyzes the transcription of DNA into RNA using the four ribonucleoside triphosphates as substrates. This Halorhodospira halophila (strain DSM 244 / SL1) (Ectothiorhodospira halophila (strain DSM 244 / SL1)) protein is DNA-directed RNA polymerase subunit beta'.